Reading from the N-terminus, the 128-residue chain is Small ribosomal subunit protein eS8 (128 aa).

This sequence belongs to the eukaryotic ribosomal protein eS8 family. Part of the 30S ribosomal subunit.

In Methanococcus maripaludis (strain C6 / ATCC BAA-1332), this protein is Small ribosomal subunit protein eS8.